The sequence spans 45 residues: Large ribosomal subunit protein bL34 (45 aa).

The disordered stretch occupies residues 1–45 (MTKRTFQPNNRRRARKHGFRARMRTRAGRAILSARRGKNRAELSA). The span at 10–27 (NRRRARKHGFRARMRTRA) shows a compositional bias: basic residues.

Belongs to the bacterial ribosomal protein bL34 family.

The chain is Large ribosomal subunit protein bL34 from Micrococcus luteus (strain ATCC 4698 / DSM 20030 / JCM 1464 / CCM 169 / CCUG 5858 / IAM 1056 / NBRC 3333 / NCIMB 9278 / NCTC 2665 / VKM Ac-2230) (Micrococcus lysodeikticus).